The primary structure comprises 127 residues: Aspartate 1-decarboxylase (127 aa).

S25 serves as the catalytic Schiff-base intermediate with substrate; via pyruvic acid. At S25 the chain carries Pyruvic acid (Ser). T57 is a substrate binding site. The active-site Proton donor is the Y58. 73–75 (GAA) is a binding site for substrate.

Belongs to the PanD family. As to quaternary structure, heterooctamer of four alpha and four beta subunits. Requires pyruvate as cofactor. Is synthesized initially as an inactive proenzyme, which is activated by self-cleavage at a specific serine bond to produce a beta-subunit with a hydroxyl group at its C-terminus and an alpha-subunit with a pyruvoyl group at its N-terminus.

It is found in the cytoplasm. It carries out the reaction L-aspartate + H(+) = beta-alanine + CO2. It participates in cofactor biosynthesis; (R)-pantothenate biosynthesis; beta-alanine from L-aspartate: step 1/1. Catalyzes the pyruvoyl-dependent decarboxylation of aspartate to produce beta-alanine. The protein is Aspartate 1-decarboxylase of Bacillus subtilis (strain 168).